The chain runs to 732 residues: Alpha-galactosidase Mel36A (732 aa).

Substrate contacts are provided by residues 370 to 371, Trp-415, Arg-447, 480 to 484, 530 to 533, and Asp-552; these read DD, KWDMN, and CSGG. Catalysis depends on Asp-482, which acts as the Nucleophile. The active-site Proton donor is Asp-552.

Belongs to the glycosyl hydrolase 36 family. Homotetramer.

The enzyme catalyses Hydrolysis of terminal, non-reducing alpha-D-galactose residues in alpha-D-galactosides, including galactose oligosaccharides, galactomannans and galactolipids.. Its function is as follows. Hydrolyzes the short-chain alpha-galactosaccharide raffinose. The sequence is that of Alpha-galactosidase Mel36A from Lactobacillus acidophilus (strain ATCC 700396 / NCK56 / N2 / NCFM).